The primary structure comprises 496 residues: E1B 55 kDa protein (496 aa).

A disordered region spans residues M1–G74. Low complexity predominate over residues G45–A61. Phosphoserine occurs at positions 490 and 491. T495 is subject to Phosphothreonine.

This sequence belongs to the adenoviridae E1B 55 kDa protein family. Interacts with host PML-4 and PML-5; this interaction promotes efficient subnuclear targeting of E1B-55K to PML nuclear bodies. Interacts with E4-ORF3 protein. Interacts with E4-ORF6 protein. Phosphorylation at the C-terminus affects the subcellular location.

The protein resides in the host nucleus. Its subcellular location is the host cytoplasm. Functionally, plays a major role to prevent cellular inhibition of viral genome replication. Assembles an SCF-like E3 ubiquitin ligase complex based on the cellular proteins ELOB, ELOC, CUL5 and RBX1, in cooperation with viral E4orf6. This viral RING-type ligase ubiquitinates cellular substrates and targets them to proteasomal degradation: TP53/p53, LIG4, MRE11-RAD50-NBS1 (MRN) complex, ITGA3, DAXX and BLM. E1B-55K probably acts as the substrate-specific adapter of the SCF-like E3 ubiquitin ligase complex. Degradation of host TP53/p53 activity is essential for preventing E1A-induced TP53 accumulation that would otherwise lead to cell apoptosis and growth arrest. E1B-55K also inactivates TP53 transcription-factor activity by binding its transactivation domain. E1B-55K also functions as a SUMO1 E3 ligase for TP53 which causes the latter to be sequestered in promyelocytic leukemia (PML) nuclear bodies thereby contributing to maximal inhibition of TP53 function. The protein is E1B 55 kDa protein of Homo sapiens (Human).